Reading from the N-terminus, the 208-residue chain is Guanylate kinase (208 aa).

Positions G21 to V201 constitute a Guanylate kinase-like domain. Residue G28–S35 participates in ATP binding.

This sequence belongs to the guanylate kinase family.

The protein resides in the cytoplasm. It catalyses the reaction GMP + ATP = GDP + ADP. Essential for recycling GMP and indirectly, cGMP. The polypeptide is Guanylate kinase (gmk) (Mycobacterium bovis (strain ATCC BAA-935 / AF2122/97)).